Reading from the N-terminus, the 112-residue chain is Putative pterin-4-alpha-carbinolamine dehydratase (112 aa).

This sequence belongs to the pterin-4-alpha-carbinolamine dehydratase family.

The enzyme catalyses (4aS,6R)-4a-hydroxy-L-erythro-5,6,7,8-tetrahydrobiopterin = (6R)-L-erythro-6,7-dihydrobiopterin + H2O. In Shewanella halifaxensis (strain HAW-EB4), this protein is Putative pterin-4-alpha-carbinolamine dehydratase.